Consider the following 330-residue polypeptide: MKTAYIAKQRQISFVKSHFSRQLEERLGLIEVQAPILSRVGDGTQDNLSGCEKAVQVKVKALPDAQFEVVHSLAKWKRQTLGQHDFSAGEGLYTHMKALRPDEERLSPLHSVYVDQWDWERVMGDGERQFSTLKSTVEAIWAGIKATEAAVSEEFGLAPFLPDQIHFVHSQELLSRYPDLDAKGRERAIAKDLGAVFLVGIGGKLSDGHRHDVRAPDYDDWSTPSELGHAGLNGDILVWNPVLEDAFELSSMGIRVDADTLKHQLALTGDEDRLQLEWHQALLRGEMPQTIGGGIGQSRLTMLLLQLPHIGQVQCGVWPAAVRENVPSLL.

It belongs to the class-II aminoacyl-tRNA synthetase family. AsnA subfamily.

The protein resides in the cytoplasm. It catalyses the reaction L-aspartate + NH4(+) + ATP = L-asparagine + AMP + diphosphate + H(+). It functions in the pathway amino-acid biosynthesis; L-asparagine biosynthesis; L-asparagine from L-aspartate (ammonia route): step 1/1. The protein is Aspartate--ammonia ligase of Escherichia coli O139:H28 (strain E24377A / ETEC).